The chain runs to 341 residues: MTKDILILAVETSCDETSVSVIKNGRDILSNTVLSQIESHKRFGGVVPEVASRHHVEGITTTINEALVDADVSMEDIDAIAVTEGPGLIGALLIGVNAAKALAFAYDKPLIPVHHIAGHIYANHIEEPLTFPLIALIVSGGHTELVYMKDHLSFEVIGETRDDAVGEAYDKVARTIGLNYPGGPQVDRLAAEGEDTYSFPRVWLDKDSYDFSFSGLKSAVINQLHNQRQKNIPIIEANVATSFQNSVVEVLTFKAIQACKEYSVQRLIVAGGVASNKGLRQSLADQCKVNDIQLTIPSPKLCTDNAAMIGVAGHYLYQQGRFADLALNGHSNIDLEEYSAE.

Residues His-115 and His-119 each coordinate Fe cation. Substrate is bound by residues 137–141 (IVSGG), Asp-170, Gly-183, Asp-187, and Asn-276. Asp-304 serves as a coordination point for Fe cation.

The protein belongs to the KAE1 / TsaD family. Fe(2+) serves as cofactor.

It is found in the cytoplasm. The enzyme catalyses L-threonylcarbamoyladenylate + adenosine(37) in tRNA = N(6)-L-threonylcarbamoyladenosine(37) in tRNA + AMP + H(+). In terms of biological role, required for the formation of a threonylcarbamoyl group on adenosine at position 37 (t(6)A37) in tRNAs that read codons beginning with adenine. Is involved in the transfer of the threonylcarbamoyl moiety of threonylcarbamoyl-AMP (TC-AMP) to the N6 group of A37, together with TsaE and TsaB. TsaD likely plays a direct catalytic role in this reaction. This is tRNA N6-adenosine threonylcarbamoyltransferase from Staphylococcus aureus (strain JH1).